The primary structure comprises 336 residues: MFYPFIRKALFQLDPERAHEFTFRQLHRISGTPLIGLLRQSVPSKPVSCMGLSFKNPLGLAAGLDKDGECIDALGAMGFGSIEVGTVTPRPQPGNEKPRLFRIVEAEGLINRMGFNNLGVDNLVENVKKSHFGGILGINIGKNKDTPVEQGKDDYLMCMDKVYSYAGYIAVNISSPNTPGLRTLQYGEALDDLLAAIKTKQAELQQKHARYVPVAVKIAPDLSHEELVQIADSLVRHQIDGVIATNTTLDRSLVNGLNHCAQSGGLSGRPLQLKSTEIIRQLSAELQGRLPIIGVGGIDSVIAAREKMQAGASLVQIYSGFIFKGPGLVKEIVNHI.

Residues 62–66 (AGLDK) and Thr-86 contribute to the FMN site. Lys-66 is a substrate binding site. 111-115 (NRMGF) serves as a coordination point for substrate. Residues Asn-139 and Asn-172 each contribute to the FMN site. Asn-172 is a binding site for substrate. Ser-175 (nucleophile) is an active-site residue. Asn-177 provides a ligand contact to substrate. Residues Lys-217 and Thr-245 each contribute to the FMN site. 246-247 (NT) lines the substrate pocket. Residues Gly-268, Gly-297, and 318 to 319 (YS) contribute to the FMN site.

This sequence belongs to the dihydroorotate dehydrogenase family. Type 2 subfamily. As to quaternary structure, monomer. FMN serves as cofactor.

The protein localises to the cell membrane. The enzyme catalyses (S)-dihydroorotate + a quinone = orotate + a quinol. It participates in pyrimidine metabolism; UMP biosynthesis via de novo pathway; orotate from (S)-dihydroorotate (quinone route): step 1/1. Its function is as follows. Catalyzes the conversion of dihydroorotate to orotate with quinone as electron acceptor. This Edwardsiella ictaluri (strain 93-146) protein is Dihydroorotate dehydrogenase (quinone).